Consider the following 145-residue polypeptide: Bacilliredoxin GK1781 (145 aa).

The protein belongs to the bacilliredoxin family.

The polypeptide is Bacilliredoxin GK1781 (Geobacillus kaustophilus (strain HTA426)).